The primary structure comprises 495 residues: Cobyric acid synthase (495 aa).

The GATase cobBQ-type domain occupies 249–443 (EININVIRLP…LHGLFDNGAW (195 aa)). The Nucleophile role is filled by Cys330. Residue His435 is part of the active site.

Belongs to the CobB/CobQ family. CobQ subfamily.

It functions in the pathway cofactor biosynthesis; adenosylcobalamin biosynthesis. Its function is as follows. Catalyzes amidations at positions B, D, E, and G on adenosylcobyrinic A,C-diamide. NH(2) groups are provided by glutamine, and one molecule of ATP is hydrogenolyzed for each amidation. The polypeptide is Cobyric acid synthase (Gloeothece citriformis (strain PCC 7424) (Cyanothece sp. (strain PCC 7424))).